The following is a 343-amino-acid chain: Protein RecA (343 aa).

66–73 provides a ligand contact to ATP; the sequence is GPESSGKT.

This sequence belongs to the RecA family.

Its subcellular location is the cytoplasm. In terms of biological role, can catalyze the hydrolysis of ATP in the presence of single-stranded DNA, the ATP-dependent uptake of single-stranded DNA by duplex DNA, and the ATP-dependent hybridization of homologous single-stranded DNAs. It interacts with LexA causing its activation and leading to its autocatalytic cleavage. The polypeptide is Protein RecA (Nitrosomonas eutropha (strain DSM 101675 / C91 / Nm57)).